The following is a 217-amino-acid chain: Adenylate kinase (217 aa).

Residue Gly10–Thr15 coordinates ATP. The NMP stretch occupies residues Ser30–Val59. AMP contacts are provided by residues Thr31, Arg36, Gln57–Val59, Gly85–Arg88, and Gln92. The tract at residues Gly122–Asp159 is LID. ATP is bound by residues Arg123 and Ile132–Tyr133. AMP is bound by residues Arg156 and Arg167. Gly202 serves as a coordination point for ATP.

Belongs to the adenylate kinase family. In terms of assembly, monomer.

The protein localises to the cytoplasm. The catalysed reaction is AMP + ATP = 2 ADP. Its pathway is purine metabolism; AMP biosynthesis via salvage pathway; AMP from ADP: step 1/1. Catalyzes the reversible transfer of the terminal phosphate group between ATP and AMP. Plays an important role in cellular energy homeostasis and in adenine nucleotide metabolism. The chain is Adenylate kinase from Teredinibacter turnerae (strain ATCC 39867 / T7901).